The following is a 202-amino-acid chain: Ribonuclease HII (202 aa).

The RNase H type-2 domain maps to 15 to 202 (QGVAGVDEAG…APIKAFGISA (188 aa)). A divalent metal cation-binding residues include Asp21, Glu22, and Asp113.

The protein belongs to the RNase HII family. The cofactor is Mn(2+). Mg(2+) is required as a cofactor.

The protein resides in the cytoplasm. It carries out the reaction Endonucleolytic cleavage to 5'-phosphomonoester.. Its function is as follows. Endonuclease that specifically degrades the RNA of RNA-DNA hybrids. The protein is Ribonuclease HII of Bordetella avium (strain 197N).